Here is a 420-residue protein sequence, read N- to C-terminus: Glycogen synthase kinase-3 beta (420 aa).

Positions 1–22 (MSGRPRTTSFAESCKPVQQPSA) are enriched in polar residues. The interval 1 to 53 (MSGRPRTTSFAESCKPVQQPSAFGSMKVSRDKDGSKVTTVVATPGQGPDRPQE) is disordered. Phosphoserine; by PKB/AKT1, RPS6KA3 and SGK3 is present on Ser9. The S-palmitoyl cysteine moiety is linked to residue Cys14. The 285-residue stretch at 56–340 (YTDTKVIGNG…PLEACAHSFF (285 aa)) folds into the Protein kinase domain. Residues 62–70 (IGNGSFGVV) and Lys85 each bind ATP. The active-site Proton acceptor is Asp181. Position 216 is a phosphotyrosine (Tyr216). Residues 386–401 (AAASTPTNATAASDAN) are compositionally biased toward low complexity. Positions 386-420 (AAASTPTNATAASDANTGDRGQTNNAASASASNST) are disordered. Ser389 carries the phosphoserine modification. A phosphothreonine mark is found at Thr390 and Thr402. A compositionally biased stretch (low complexity) spans 409 to 420 (NNAASASASNST).

Belongs to the protein kinase superfamily. CMGC Ser/Thr protein kinase family. GSK-3 subfamily. As to quaternary structure, monomer. Interacts with ARRB2, DISC1 and ZBED3. Interacts with CABYR, MMP2, MUC1, NIN and PRUNE1. Interacts with AXIN1; the interaction mediates hyperphosphorylation of CTNNB1 leading to its ubiquitination and destruction. Interacts with and phosphorylates SNAI1. Interacts with DNM1L (via a C-terminal domain). Found in a complex composed of MACF1, APC, AXIN1, CTNNB1 and GSK3B. Interacts with SGK3. Interacts with DAB2IP (via C2 domain); the interaction stimulates GSK3B kinase activation. Interacts (via C2 domain) with PPP2CA. Interacts with the CLOCK-BMAL1 heterodimer. Interacts with the BMAL1. Interacts with CTNND2. Interacts with NCYM. The complex composed, at least, of APC, CTNNB1 and GSK3B interacts with JPT1; the interaction requires the inactive form of GSK3B (phosphorylated at 'Ser-9'). Forms a complex composed of PRKAR2A or PRKAR2B, GSK3B and GSKIP through GSKIP interaction; facilitates PKA-induced phosphorylation and regulates GSK3B activity. Interacts with GSKIP. Interacts with GID8. Interacts with PIWIL2. Interacts with LMBR1L. Interacts with DDX3X. Interacts with BIRC2. Interacts with TNFRSF10B; TNFRSF10B stimulation inhibits GSK3B kinase activity. Interacts with RICTOR; the interaction results in phosphorylation of RICTOR at 'Thr-1695' by GSK3B which facilitates FBXW7-mediated ubiquitination and subsequent degradation of RICTOR. Found in a complex with SLC39A6, SLC39A10 and with GSK3B that controls NCAM1 phosphorylation. Interacts with PKP3 (via ARM repeats); the interaction may be involved in PKP3 protein degradation. Phosphorylated by AKT1 and ILK1. Upon insulin-mediated signaling, the activated PKB/AKT1 protein kinase phosphorylates and deactivates GSK3B, resulting in the dephosphorylation and activation of GYS1. Activated by phosphorylation at Tyr-216. Inactivated by phosphorylation at Ser-9. Phosphorylated in a circadian manner in the hippocampus. Post-translationally, mono-ADP-ribosylation by PARP10 negatively regulates kinase activity. In terms of processing, palmitoylated. Palmitoylation by ZDHHC4 prevents AKT1-mediated phosphorylation. Expressed in testis, thymus, prostate and ovary and weakly expressed in lung, brain and kidney. Colocalizes with EIF2AK2/PKR and TAU in the Alzheimer disease (AD) brain.

Its subcellular location is the cytoplasm. It localises to the nucleus. The protein resides in the cell membrane. It carries out the reaction L-seryl-[tau protein] + ATP = O-phospho-L-seryl-[tau protein] + ADP + H(+). The enzyme catalyses L-threonyl-[tau protein] + ATP = O-phospho-L-threonyl-[tau protein] + ADP + H(+). The catalysed reaction is L-seryl-[protein] + ATP = O-phospho-L-seryl-[protein] + ADP + H(+). It catalyses the reaction L-threonyl-[protein] + ATP = O-phospho-L-threonyl-[protein] + ADP + H(+). With respect to regulation, activated by phosphorylation at Tyr-216. In response to insulin, inhibited by phosphorylation at Ser-9 by PKB/AKT1 and RPS6KA3; phosphorylation at this site causes a conformational change, preventing access of substrates to the active site. Inhibited by IL22 treatment which also triggers phosphorylation at Ser-9, promoting inactivation. Inhibited by lithium. Its function is as follows. Constitutively active protein kinase that acts as a negative regulator in the hormonal control of glucose homeostasis, Wnt signaling and regulation of transcription factors and microtubules, by phosphorylating and inactivating glycogen synthase (GYS1 or GYS2), EIF2B, CTNNB1/beta-catenin, APC, AXIN1, DPYSL2/CRMP2, JUN, NFATC1/NFATC, MAPT/TAU and MACF1. Requires primed phosphorylation of the majority of its substrates. In skeletal muscle, contributes to insulin regulation of glycogen synthesis by phosphorylating and inhibiting GYS1 activity and hence glycogen synthesis. May also mediate the development of insulin resistance by regulating activation of transcription factors. Regulates protein synthesis by controlling the activity of initiation factor 2B (EIF2BE/EIF2B5) in the same manner as glycogen synthase. In Wnt signaling, GSK3B forms a multimeric complex with APC, AXIN1 and CTNNB1/beta-catenin and phosphorylates the N-terminus of CTNNB1 leading to its degradation mediated by ubiquitin/proteasomes. Phosphorylates JUN at sites proximal to its DNA-binding domain, thereby reducing its affinity for DNA. Phosphorylates NFATC1/NFATC on conserved serine residues promoting NFATC1/NFATC nuclear export, shutting off NFATC1/NFATC gene regulation, and thereby opposing the action of calcineurin. Phosphorylates MAPT/TAU on 'Thr-548', decreasing significantly MAPT/TAU ability to bind and stabilize microtubules. MAPT/TAU is the principal component of neurofibrillary tangles in Alzheimer disease. Plays an important role in ERBB2-dependent stabilization of microtubules at the cell cortex. Phosphorylates MACF1, inhibiting its binding to microtubules which is critical for its role in bulge stem cell migration and skin wound repair. Probably regulates NF-kappa-B (NFKB1) at the transcriptional level and is required for the NF-kappa-B-mediated anti-apoptotic response to TNF-alpha (TNF/TNFA). Negatively regulates replication in pancreatic beta-cells, resulting in apoptosis, loss of beta-cells and diabetes. Through phosphorylation of the anti-apoptotic protein MCL1, may control cell apoptosis in response to growth factors deprivation. Phosphorylates MUC1 in breast cancer cells, decreasing the interaction of MUC1 with CTNNB1/beta-catenin. Is necessary for the establishment of neuronal polarity and axon outgrowth. Phosphorylates MARK2, leading to inhibition of its activity. Phosphorylates SIK1 at 'Thr-182', leading to sustainment of its activity. Phosphorylates ZC3HAV1 which enhances its antiviral activity. Phosphorylates SNAI1, leading to its ubiquitination and proteasomal degradation. Phosphorylates SFPQ at 'Thr-687' upon T-cell activation. Phosphorylates NR1D1 st 'Ser-55' and 'Ser-59' and stabilizes it by protecting it from proteasomal degradation. Regulates the circadian clock via phosphorylation of the major clock components including BMAL1, CLOCK and PER2. Phosphorylates FBXL2 at 'Thr-404' and primes it for ubiquitination by the SCF(FBXO3) complex and proteasomal degradation. Phosphorylates CLOCK AT 'Ser-427' and targets it for proteasomal degradation. Phosphorylates BMAL1 at 'Ser-17' and 'Ser-21' and primes it for ubiquitination and proteasomal degradation. Phosphorylates OGT at 'Ser-3' or 'Ser-4' which positively regulates its activity. Phosphorylates MYCN in neuroblastoma cells which may promote its degradation. Regulates the circadian rhythmicity of hippocampal long-term potentiation and BMAL1 and PER2 expression. Acts as a regulator of autophagy by mediating phosphorylation of KAT5/TIP60 under starvation conditions, activating KAT5/TIP60 acetyltransferase activity and promoting acetylation of key autophagy regulators, such as ULK1 and RUBCNL/Pacer. Negatively regulates extrinsic apoptotic signaling pathway via death domain receptors. Promotes the formation of an anti-apoptotic complex, made of DDX3X, BRIC2 and GSK3B, at death receptors, including TNFRSF10B. The anti-apoptotic function is most effective with weak apoptotic signals and can be overcome by stronger stimulation. Phosphorylates E2F1, promoting the interaction between E2F1 and USP11, stabilizing E2F1 and promoting its activity. Phosphorylates mTORC2 complex component RICTOR at 'Ser-1235' in response to endoplasmic stress, inhibiting mTORC2. Phosphorylates mTORC2 complex component RICTOR at 'Thr-1695' which facilitates FBXW7-mediated ubiquitination and subsequent degradation of RICTOR. Phosphorylates FXR1, promoting FXR1 ubiquitination by the SCF(FBXO4) complex and FXR1 degradation by the proteasome. Phosphorylates interleukin-22 receptor subunit IL22RA1, preventing its proteasomal degradation. This is Glycogen synthase kinase-3 beta from Homo sapiens (Human).